Here is a 373-residue protein sequence, read N- to C-terminus: Chaperone protein DnaJ (373 aa).

The J domain occupies 5 to 70; that stretch reads DYYEVLGVNR…QKRAAYDQYG (66 aa). The segment at 133–211 adopts a CR-type zinc-finger fold; it reads GTETKIRIPV…CHGGGRVKQH (79 aa). Cysteine 146, cysteine 149, cysteine 163, cysteine 166, cysteine 185, cysteine 188, cysteine 199, and cysteine 202 together coordinate Zn(2+). CXXCXGXG motif repeat units lie at residues 146–153, 163–170, 185–192, and 199–206; these read CETCHGSG, CSTCGGHG, CPKCHGSG, and CPTCHGGG. Residues 346-373 are disordered; it reads LEDINQQDSGKHSPREKSWMTKVKDFFQ. Residues 354–373 are compositionally biased toward basic and acidic residues; it reads SGKHSPREKSWMTKVKDFFQ.

Belongs to the DnaJ family. In terms of assembly, homodimer. Zn(2+) serves as cofactor.

The protein localises to the cytoplasm. Functionally, participates actively in the response to hyperosmotic and heat shock by preventing the aggregation of stress-denatured proteins and by disaggregating proteins, also in an autonomous, DnaK-independent fashion. Unfolded proteins bind initially to DnaJ; upon interaction with the DnaJ-bound protein, DnaK hydrolyzes its bound ATP, resulting in the formation of a stable complex. GrpE releases ADP from DnaK; ATP binding to DnaK triggers the release of the substrate protein, thus completing the reaction cycle. Several rounds of ATP-dependent interactions between DnaJ, DnaK and GrpE are required for fully efficient folding. Also involved, together with DnaK and GrpE, in the DNA replication of plasmids through activation of initiation proteins. The chain is Chaperone protein DnaJ from Methylobacillus flagellatus (strain ATCC 51484 / DSM 6875 / VKM B-1610 / KT).